The sequence spans 757 residues: Two pore calcium channel protein 1 (757 aa).

The Cytoplasmic portion of the chain corresponds to 1-94 (MRERGEMREA…NDTRFERAMR (94 aa)). The interval 24–48 (HSHGSGSSGTGSHTSGGGGGWRGSR) is disordered. The span at 29 to 45 (GSSGTGSHTSGGGGGWR) shows a compositional bias: gly residues. Residues 95-115 (FYFVYLRLDWLWSLNLFALIL) traverse the membrane as a helical segment. Topologically, residues 116–152 (LNFLEKPLWCRGYSQHACDQRDLYFLGQLPYLSKTES) are extracellular. A helical transmembrane segment spans residues 153-173 (LIYEGLTLVILVMDIFYPLSY). At 174–188 (EGLNLFWKNTINKLK) the chain is on the cytoplasmic side. The helical transmembrane segment at 189 to 209 (VLLLFILACDILVFAFSPQPF) threads the bilayer. Position 210 (arginine 210) is a topological domain, extracellular. A helical; Voltage-sensor membrane pass occupies residues 211 to 228 (VAPYIRVAFLIMNIRELR). Residues 229–233 (MCAVT) are Cytoplasmic-facing. The chain crosses the membrane as a helical span at residues 234 to 254 (LVGMVGTYLNVLALSLLFLLF). At 255 to 270 (ASWLAYVTFEDTPQGK) the chain is on the extracellular side. Residues 271 to 285 (TVFSSYGTTLYQMFI) constitute an intramembrane region (pore-forming). Topologically, residues 286–308 (LFTTSNNPDVWVPAYKSSRWSSL) are extracellular. The helical transmembrane segment at 309 to 329 (FFIVYVLLGVYFLTNLILAVI) threads the bilayer. The Cytoplasmic segment spans residues 330–453 (YDSFKEQLAK…LCEWLKSFVR (124 aa)). 2 consecutive EF-hand domains span residues 347-382 (TRKS…LNKY) and 388-423 (TSRE…IAIK). The chain crosses the membrane as a helical span at residues 454–474 (SPLFEYIVIFVLLMNLVAVII). Residues 475-493 (ETTLDIENSSSQKVWQEVE) are Extracellular-facing. Asparagine 482 is a glycosylation site (N-linked (GlcNAc...) asparagine). A helical membrane pass occupies residues 494-514 (FVFGWIYVIEMALKIFSLGFG). The Cytoplasmic segment spans residues 515–523 (AYWMEGQNK). A helical membrane pass occupies residues 524–544 (FDFVLTWTIFIGETLTFAFPS). Residues 545–553 (KLSFLSNGE) lie on the Extracellular side of the membrane. A helical; Voltage-sensor membrane pass occupies residues 554–571 (WIRYLLLGRMLRLTRILL). The Cytoplasmic portion of the chain corresponds to 572 to 595 (QVRRFRAFVATFFTLMSSLMPYLG). A helical membrane pass occupies residues 596 to 616 (IVFCTLCIYCSLGLQIFGGIV). Topologically, residues 617-640 (YAGNPTLEETDLFSNDYLLFNFND) are extracellular. The segment at residues 641-655 (YPSGMVTLFNLLVMG) is an intramembrane region (pore-forming). The Extracellular portion of the chain corresponds to 656-676 (NWQAWMESYRQLTGSYWSLIY). The chain crosses the membrane as a helical span at residues 677-697 (FVSFYLISVLLLLNLIVAFVL). Residues 698–757 (EAFFAEMELEKDGEADIQDPTLEGRNRRRSVRVRTKGTMVDILLHHMLSNELDGSQNRDQ) lie on the Cytoplasmic side of the membrane.

It belongs to the calcium channel alpha-1 subunit (TC 1.A.1.11) family. Two pore calcium channel subfamily. As to quaternary structure, homodimer. Expressed in shoot, mature leaf, cultured cells, and at lower level in roots.

It is found in the membrane. With respect to regulation, inhibited by the VDCC blocker verapamil in yeast cells. Channel activity may be down-regulated by cytosolic Ca(2+) in rice cells. Inhibited by Al(3+). May function as one of the major voltage-gated Ca(2+) channel (VDCC) across the plasma membrane. May be involved in the regulation of cytosolic Ca(2+) and in growth and development. Acts as the major ROS-responsive Ca(2+) channel and is the possible target of Al-dependent inhibition. Determines sensitivity to T.viride xylanase elicitor. Plays a regulatory role in elicitor-induced defense responses and hypersensitive cell death. The polypeptide is Two pore calcium channel protein 1 (TPC1) (Oryza sativa subsp. japonica (Rice)).